A 301-amino-acid chain; its full sequence is Isonocardicin synthase (301 aa).

Monomer.

It carries out the reaction nocardicin G + S-adenosyl-L-methionine = isonocardicin C + S-methyl-5'-thioadenosine + H(+). It catalyses the reaction nocardicin E + S-adenosyl-L-methionine = isonocardicin A + S-methyl-5'-thioadenosine + H(+). It participates in antibiotic biosynthesis. Involved in the biosynthesis of the beta-lactam antibiotic nocardicin A. In the presence of S-adenosyl-L-methionine (AdoMet), catalyzes the transfer of a 3-amino-3-carboxypropyl group from AdoMet to nocardicin G, forming isonocardicin C. Can also catalyze the transformation of nocardicin E and F to isonocardicin A and B, respectively, but in vivo substrate is probably nocardicin G. This is Isonocardicin synthase from Nocardia uniformis subsp. tsuyamanensis.